The chain runs to 923 residues: Cell cycle and apoptosis regulator protein 2 (923 aa).

Residues 1–35 are disordered; it reads MSQFKRQRINPLPGGRNFSGTASTSLLGPPPGLLT. Phosphothreonine is present on threonine 35. An N6-acetyllysine; by KAT8 modification is found at lysine 112. At lysine 123 the chain carries N6-methyllysine. Serine 124 carries the phosphoserine modification. Disordered regions lie at residues 178–218, 446–510, and 568–643; these read LNRF…KKPR, KAAE…PAVI, and VSPP…SEDL. Arginine 180 is modified (omega-N-methylarginine). Over residues 188–200 the composition is skewed to basic and acidic residues; the sequence is GRLDQGRSDDYDS. Lysine 215 carries the N6-acetyllysine; by KAT8 modification. The span at 446-458 shows a compositional bias: low complexity; the sequence is KAAEAAPPTQEAQ. The residue at position 454 (threonine 454) is a Phosphothreonine; by ATM, ATR and CK2. Threonine 484 is subject to Phosphothreonine. Serine 569 is subject to Phosphoserine. Basic and acidic residues predominate over residues 572–602; that stretch reads EPEKEEAAKEEATKEEEAIKEEVVKEPKDEA. Residue lysine 591 forms a Glycyl lysine isopeptide (Lys-Gly) (interchain with G-Cter in SUMO2 and SUMO3); alternate linkage. Lysine 591 participates in a covalent cross-link: Glycyl lysine isopeptide (Lys-Gly) (interchain with G-Cter in SUMO2); alternate. The interaction with MCC stretch occupies residues 610-670; sequence ESEAPLKEDG…EEFAGAKLED (61 aa). Phosphoserine is present on residues serine 627, serine 675, serine 678, serine 681, serine 687, and serine 808. The tract at residues 704 to 923 is interaction with NR1D1; sequence DCLLAFVFFD…VEKEEPAPSN (220 aa). Residues 829–909 are a coiled coil; it reads LENKIHTLEL…QLEIQRVVEK (81 aa). A Phosphothreonine modification is found at threonine 897.

Component of the DBIRD complex. Interacts with ZNF326/ZIRD; the interaction is direct. Interacts (via N-terminus) with SIRT1, which inhibits the deacetylation of substrates. Interacts (via N-terminus) with SUV39H1; this interaction abolishes the interaction with SIRT1. Component of a nuclear receptor-mediated transcription complex composed of at least ZNF335, CCAR2 and EMSY; the complex stimulates the transcription of nuclear receptor target genes such as SOX9 and HOXA1. Within the complex interacts with EMSY and interacts with ZNF335 (via C-terminus). Components of this complex may associate with components of a histone methylation complex to form a complex at least composed of ZNF335, HCFC1, CCAR2, EMSY, MKI67, RBBP5, ASH2L and WDR5. Within this complex, interacts with ASH2L. Interacts with NR1D1. Interacts (via N-terminus) with ESR1 and ESR2. Interacts (via N-terminus) with HDAC3 (via C-terminus). Interacts with HDAC1 and MED2F. Interacts with MCC. Interacts (via N-terminus) with NR1H2 and NR1H3 in a ligand-independent manner. Interacts with CSNK2A1. Interacts (via N-terminus) with p53/TP53. Interacts (via N-terminus) with BRCA1 (via the BRCT domains). Interacts (via N-terminus) with CHEK2 (via protein kinase domain). Interacts with PSEM3. Interacts (via N-terminus) with PSIA3 and SENP1. The sumoylated form shows a preferential interaction with SIRT1 as compared to its unmodified form. Interacts with CECR2; may form part of the CERF-1 and/or CEF-5 ISWI chromatin remodeling complexes in embryonic stem cells. In terms of processing, ATM/ATR-mediated phosphorylation at Thr-454 upon DNA damage promotes binding to SIRT1. Phosphorylation at Thr-454 promotes its sumoylation by switching the binding partner of CCAR2 from SENP1 to PIAS3. Acetylation at Lys-112 and Lys-215 by KAT8 prevents inhibitory binding to SIRT1 and increases its deacetylase activity. Post-translationally, genotoxic stress induces its sumoylation and sumoylation promotes the SIRT1-CCAR2 interaction which in turn inhibits SIRT1-mediated deacetylation of p53/TP53. Sumoylation leads to transcriptional activation of p53/TP53 by sequestering SIRT1 from p53/TP53. Desumoylated by SENP1. As to expression, expressed in gastric carcinoma tissue and the expression gradually increases with the progression of the carcinoma (at protein level). Expressed ubiquitously in normal tissues. Expressed in 84 to 100% of neoplastic breast, lung, and colon tissues.

It is found in the nucleus. It localises to the cytoplasm. Its subcellular location is the cytoskeleton. The protein localises to the spindle. In terms of biological role, core component of the DBIRD complex, a multiprotein complex that acts at the interface between core mRNP particles and RNA polymerase II (RNAPII) and integrates transcript elongation with the regulation of alternative splicing: the DBIRD complex affects local transcript elongation rates and alternative splicing of a large set of exons embedded in (A + T)-rich DNA regions. Inhibits SIRT1 deacetylase activity leading to increasing levels of p53/TP53 acetylation and p53-mediated apoptosis. Inhibits SUV39H1 methyltransferase activity. Mediates ligand-dependent transcriptional activation by nuclear hormone receptors. Plays a critical role in maintaining genomic stability and cellular integrity following UV-induced genotoxic stress. Regulates the circadian expression of the core clock components NR1D1 and BMAL1. Enhances the transcriptional repressor activity of NR1D1 through stabilization of NR1D1 protein levels by preventing its ubiquitination and subsequent degradation. Represses the ligand-dependent transcriptional activation function of ESR2. Acts as a regulator of PCK1 expression and gluconeogenesis by a mechanism that involves, at least in part, both NR1D1 and SIRT1. Negatively regulates the deacetylase activity of HDAC3 and can alter its subcellular localization. Positively regulates the beta-catenin pathway (canonical Wnt signaling pathway) and is required for MCC-mediated repression of the beta-catenin pathway. Represses ligand-dependent transcriptional activation function of NR1H2 and NR1H3 and inhibits the interaction of SIRT1 with NR1H3. Plays an important role in tumor suppression through p53/TP53 regulation; stabilizes p53/TP53 by affecting its interaction with ubiquitin ligase MDM2. Represses the transcriptional activator activity of BRCA1. Inhibits SIRT1 in a CHEK2 and PSEM3-dependent manner and inhibits the activity of CHEK2 in vitro. The protein is Cell cycle and apoptosis regulator protein 2 (CCAR2) of Homo sapiens (Human).